The chain runs to 1195 residues: Error-prone DNA polymerase (1195 aa).

Positions 1163 to 1195 (ALNGDRRDTPDAPAQRHRHPRDVRILPPSRDFH) are disordered.

The protein belongs to the DNA polymerase type-C family. DnaE2 subfamily.

The protein localises to the cytoplasm. It catalyses the reaction DNA(n) + a 2'-deoxyribonucleoside 5'-triphosphate = DNA(n+1) + diphosphate. Functionally, DNA polymerase involved in damage-induced mutagenesis and translesion synthesis (TLS). It is not the major replicative DNA polymerase. The polypeptide is Error-prone DNA polymerase (Rhodopseudomonas palustris (strain ATCC BAA-98 / CGA009)).